The sequence spans 186 residues: Pyridoxal 5'-phosphate synthase subunit PdxT (186 aa).

47 to 49 (GES) lines the L-glutamine pocket. Cys76 (nucleophile) is an active-site residue. Residues Arg102 and 130–131 (IR) contribute to the L-glutamine site. Active-site charge relay system residues include His166 and Glu168.

The protein belongs to the glutaminase PdxT/SNO family. In terms of assembly, in the presence of PdxS, forms a dodecamer of heterodimers. Only shows activity in the heterodimer.

It catalyses the reaction aldehydo-D-ribose 5-phosphate + D-glyceraldehyde 3-phosphate + L-glutamine = pyridoxal 5'-phosphate + L-glutamate + phosphate + 3 H2O + H(+). The enzyme catalyses L-glutamine + H2O = L-glutamate + NH4(+). It functions in the pathway cofactor biosynthesis; pyridoxal 5'-phosphate biosynthesis. Catalyzes the hydrolysis of glutamine to glutamate and ammonia as part of the biosynthesis of pyridoxal 5'-phosphate. The resulting ammonia molecule is channeled to the active site of PdxS. This Staphylococcus epidermidis (strain ATCC 35984 / DSM 28319 / BCRC 17069 / CCUG 31568 / BM 3577 / RP62A) protein is Pyridoxal 5'-phosphate synthase subunit PdxT.